The chain runs to 584 residues: Chondroitin proteoglycan 1 (584 aa).

The first 17 residues, 1 to 17, serve as a signal peptide directing secretion; it reads MTLKPVLLAFLVASAYA. Serine 50 is a glycosylation site (O-linked (Xyl...) (chondroitin sulfate) serine). Chitin-binding type-2 domains lie at 58–115, 211–268, and 524–578; these read DTDC…QCGG, TKSC…ECTN, and VPAC…ECHQ. 2 disulfides stabilise this stretch: cysteine 91-cysteine 104 and cysteine 244-cysteine 257. A disordered region spans residues 267–295; that stretch reads TNGSGNDEGSADETTPESSGEMPYSNGYG. A glycan (N-linked (GlcNAc...) asparagine) is linked at asparagine 268. The cysteines at positions 554 and 567 are disulfide-linked.

In terms of tissue distribution, expressed in the germline.

Required for polar body extrusion during cytokinesis in embryo development. Affects cortical granule size. Has roles in meiotic chromosome segregation, osmotic barrier function and polarization in conjunction with cpg-2. Binds chitin. In Caenorhabditis elegans, this protein is Chondroitin proteoglycan 1 (cpg-1).